An 81-amino-acid polypeptide reads, in one-letter code: UPF0180 protein RBAM_013970 (81 aa).

Belongs to the UPF0180 family.

This Bacillus velezensis (strain DSM 23117 / BGSC 10A6 / LMG 26770 / FZB42) (Bacillus amyloliquefaciens subsp. plantarum) protein is UPF0180 protein RBAM_013970.